Consider the following 518-residue polypeptide: GMP synthase [glutamine-hydrolyzing] (518 aa).

The region spanning Arg6 to Asp200 is the Glutamine amidotransferase type-1 domain. Residue Cys84 is the Nucleophile of the active site. Catalysis depends on residues His175 and Glu177. The GMPS ATP-PPase domain occupies Trp201–Arg393. An ATP-binding site is contributed by Ser228–Ser234.

As to quaternary structure, homodimer.

It carries out the reaction XMP + L-glutamine + ATP + H2O = GMP + L-glutamate + AMP + diphosphate + 2 H(+). It functions in the pathway purine metabolism; GMP biosynthesis; GMP from XMP (L-Gln route): step 1/1. Functionally, catalyzes the synthesis of GMP from XMP. This Cereibacter sphaeroides (strain ATCC 17025 / ATH 2.4.3) (Rhodobacter sphaeroides) protein is GMP synthase [glutamine-hydrolyzing].